Consider the following 385-residue polypeptide: Rhomboid domain-containing protein 3 (385 aa).

The next 5 membrane-spanning stretches (helical) occupy residues 13–33 (ALPL…LLGA), 58–78 (LGHT…TLGW), 95–115 (VLAL…VSGA), 146–166 (WLLP…PPFL), and 168–188 (LLCG…WLEL). Residues 238–264 (PPYLASSDSWPHSDGSAQLPPRLGPGQ) are disordered. The region spanning 322 to 361 (SVSSLRLQQLQHMGFPTEQAAVALAATGRVEGAVSLLVEG) is the UBA domain.

It localises to the membrane. In Mus musculus (Mouse), this protein is Rhomboid domain-containing protein 3 (Rhbdd3).